Consider the following 204-residue polypeptide: Somatotropin (204 aa).

The first 17 residues, 1–17 (MDRVVLMLSVLSLGVSS), serve as a signal peptide directing secretion. A Pyrrolidone carboxylic acid modification is found at Q18. H36 contacts Zn(2+). A disulfide bridge connects residues C69 and C177. E186 is a binding site for Zn(2+). A disulfide bridge connects residues C194 and C202.

Belongs to the somatotropin/prolactin family.

Its subcellular location is the secreted. Its function is as follows. Growth hormone plays an important role in growth control and is involved in the regulation of several anabolic processes. Implicated as an osmoregulatory substance important for seawater adaptation. This chain is Somatotropin (gh), found in Acanthopagrus butcheri (Australian black bream).